Reading from the N-terminus, the 239-residue chain is MILIEHILGNVKKDPVWQAKLKDATFDLLVLDQREAQKSRCRKLSTQGLDLGISLDRHVVLADGDVLAWDEKTNVAVVVQINLRDVMVIDLSELKSRSPDELIKTCFELGHALGNQHWKAVTKNNEVYVPLTVATTMMDSVMRTHGFQHLPFRFVKGAEILPLLSNSEARLLFGGAEDTDTHVHVASPLDEPHGSGLHIHGIHSHGDGHSHSHDSHSHSHDSDHGHSHSHGDHDHDHKH.

The segment at 185 to 239 is disordered; sequence VASPLDEPHGSGLHIHGIHSHGDGHSHSHDSHSHSHDSDHGHSHSHGDHDHDHKH. Residues 204-239 are compositionally biased toward basic and acidic residues; it reads SHGDGHSHSHDSHSHSHDSDHGHSHSHGDHDHDHKH.

This sequence belongs to the UreE family.

It localises to the cytoplasm. In terms of biological role, involved in urease metallocenter assembly. Binds nickel. Probably functions as a nickel donor during metallocenter assembly. The protein is Urease accessory protein UreE of Yersinia frederiksenii.